Consider the following 377-residue polypeptide: Chaperone protein DnaJ (377 aa).

In terms of domain architecture, J spans 5-70; the sequence is DCYEVLGISR…QKKAAYDQYG (66 aa). The CR-type zinc finger occupies 133–211; sequence GISKEIQIPT…CHGHGRYERS (79 aa). Zn(2+) contacts are provided by cysteine 146, cysteine 149, cysteine 163, cysteine 166, cysteine 185, cysteine 188, cysteine 199, and cysteine 202. 4 CXXCXGXG motif repeats span residues 146–153, 163–170, 185–192, and 199–206; these read CEQCNGSG, CGTCYGQG, CPTCRGQG, and CHKCHGHG.

This sequence belongs to the DnaJ family. In terms of assembly, homodimer. The cofactor is Zn(2+).

It localises to the cytoplasm. Functionally, participates actively in the response to hyperosmotic and heat shock by preventing the aggregation of stress-denatured proteins and by disaggregating proteins, also in an autonomous, DnaK-independent fashion. Unfolded proteins bind initially to DnaJ; upon interaction with the DnaJ-bound protein, DnaK hydrolyzes its bound ATP, resulting in the formation of a stable complex. GrpE releases ADP from DnaK; ATP binding to DnaK triggers the release of the substrate protein, thus completing the reaction cycle. Several rounds of ATP-dependent interactions between DnaJ, DnaK and GrpE are required for fully efficient folding. Also involved, together with DnaK and GrpE, in the DNA replication of plasmids through activation of initiation proteins. The protein is Chaperone protein DnaJ of Psychromonas ingrahamii (strain DSM 17664 / CCUG 51855 / 37).